Reading from the N-terminus, the 443-residue chain is Protoheme IX farnesyltransferase, mitochondrial (443 aa).

The interval 68-113 (LSQRVKPKPEPPASPFLEHTSSGQARADEDELPSFPAPSRPLSRKP) is disordered. 7 helical membrane passes run 174–194 (AGFALAPGPFDWSCFLLTSLG), 230–250 (ISPLLAVSFATCCAVPGVALL), 252–272 (WGVNPLTGALGVFNIFLYTCC), 286–306 (VGAVVGAIPPVMGWTAATGSL), 308–328 (AGALLLGGILYSWQFPHFNAL), 363–383 (LIALSTAAPVLDITTWVFPVI), and 410–430 (LFFCSLWHLPLLLLLMLTCKQ).

Belongs to the UbiA prenyltransferase family.

The protein localises to the mitochondrion membrane. The catalysed reaction is heme b + (2E,6E)-farnesyl diphosphate + H2O = Fe(II)-heme o + diphosphate. In terms of biological role, converts protoheme IX and farnesyl diphosphate to heme O. This is Protoheme IX farnesyltransferase, mitochondrial (Cox10) from Mus musculus (Mouse).